Here is a 266-residue protein sequence, read N- to C-terminus: Dickkopf-related protein 1 (266 aa).

An N-terminal signal peptide occupies residues 1-31 (MMALGAAGATRVFVAMVAAALGGHPLLGVSA). Residue Ser-61 is glycosylated (O-linked (GalNAc...) serine). 10 disulfide bridges follow: Cys-85/Cys-97, Cys-91/Cys-111, Cys-114/Cys-128, Cys-121/Cys-133, Cys-127/Cys-138, Cys-189/Cys-201, Cys-195/Cys-210, Cys-200/Cys-237, Cys-220/Cys-245, and Cys-239/Cys-263. The segment at 85 to 138 (CAEDEECGTDEYCASPTRGGDAGVQICLACRKRRKRCMRHAMCCPGNYCKNGIC) is DKK-type Cys-1. The segment at 189-263 (CLRSSDCASG…ASNSSRLHTC (75 aa)) is DKK-type Cys-2. N-linked (GlcNAc...) asparagine glycosylation occurs at Asn-256.

This sequence belongs to the dickkopf family. In terms of assembly, interacts with LRP6. Interacts (via the C-terminal Cys-rich domain) with LRP5 (via beta-propeller regions 3 and 4); the interaction, enhanced by MESD and or KREMEN, antagonizes Wnt-mediated signaling. Forms a ternary complex with LRP6 and KREM1. Interacts with KREM1. Placenta.

Its subcellular location is the secreted. In terms of biological role, antagonizes canonical Wnt signaling by inhibiting LRP5/6 interaction with Wnt and by forming a ternary complex with the transmembrane protein KREMEN that promotes internalization of LRP5/6. DKKs play an important role in vertebrate development, where they locally inhibit Wnt regulated processes such as antero-posterior axial patterning, limb development, somitogenesis and eye formation. In the adult, Dkks are implicated in bone formation and bone disease, cancer and Alzheimer disease. Inhibits the pro-apoptotic function of KREMEN1 in a Wnt-independent manner, and has anti-apoptotic activity. This Homo sapiens (Human) protein is Dickkopf-related protein 1 (DKK1).